Consider the following 2571-residue polypeptide: Stabilin-1 (2571 aa).

The signal sequence occupies residues 1–25 (MAEPRTLLLLCVLVLCLSDSSFIRG). The Extracellular segment spans residues 26–2475 (QTVRSKRCDI…RAVLGSEPPP (2450 aa)). 4 EGF-like domains span residues 111 to 149 (FECPGGPATPCSGHGTCLDGIEGNGTCVCQGNFSGSVCQ), 157 to 194 (FGPDCQSVCNCVHGVCSHGPRGDGSCRCFAGYTGPHCD), 196 to 232 (ELPVCQSLKCPQNSQCSAEAPTCKCLPGYTQQDNVCL), and 233 to 272 (APDPCQPSACSPLARCSVTPQGQAQCQCPENYHGDGKVCL). Cystine bridges form between C113/C127, C121/C137, C139/C148, C161/C172, C165/C182, C184/C193, C200/C211, C205/C218, C220/C231, C237/C248, C242/C258, and C260/C271. 2 N-linked (GlcNAc...) asparagine glycosylation sites follow: N134 and N142. 7 N-linked (GlcNAc...) asparagine glycosylation sites follow: N287, N313, N416, N607, N674, N713, and N746. 2 consecutive FAS1 domains span residues 357 to 495 (YGHL…TALR) and 507 to 642 (KKTV…EGIL). The EGF-like 5 domain occupies 729 to 769 (DCTQCPGGFSNPCYGKGNCSDGVRGNGACLCFPDYKGIACH). 3 cysteine pairs are disulfide-bonded: C733–C747, C741–C757, and C759–C768. A glycan (N-linked (GlcNAc...) asparagine) is linked at N817. 4 EGF-like domains span residues 819-859 (SMGN…NGFS), 862-904 (RSNP…RICV), 905-947 (AIDE…YECS), and 948-987 (PIDPCRVGNGGCHGLATCKAVGGGQRVCTCPPHFGGDGFS). Intrachain disulfides connect C823–C838, C832–C847, C866–C880, C874–C890, C892–C903, C909–C923, C917–C933, C935–C946, C952–C965, and C959–C975. FAS1 domains follow at residues 989–1119 (YGDI…SQVL) and 1129–1254 (GPGL…SGIL). N-linked (GlcNAc...) asparagine glycosylation is found at N1011, N1088, N1097, N1171, N1179, N1223, and N1275. A Laminin EGF-like 1 domain is found at 1328-1393 (TLCEPCPGGL…CDCDHGLCQE (66 aa)). Intrachain disulfides connect C1333–C1347, C1341–C1357, C1359–C1368, C1380–C1391, C1384–C1401, C1403–C1412, C1421–C1431, C1425–C1441, C1443–C1454, C1460–C1473, C1467–C1483, C1485–C1496, C1502–C1515, C1509–C1525, C1527–C1539, C1545–C1558, C1552–C1568, and C1570–C1582. A glycan (N-linked (GlcNAc...) asparagine) is linked at N1398. EGF-like domains lie at 1417–1455 (TDHQCPKKCDPNANCIQDSAGIPACVCAAGYSGNGSYCS), 1456–1497 (EVDP…ELCQ), 1498–1540 (EINS…QTCK), and 1541–1583 (LLDP…ITCH). N1450 and N1472 each carry an N-linked (GlcNAc...) asparagine glycan. FAS1 domains are found at residues 1583–1709 (HGRV…DHVL) and 1725–1865 (PQRN…DQLL). 2 N-linked (GlcNAc...) asparagine glycosylation sites follow: N1627 and N1728. The Laminin EGF-like 2 domain maps to 1966 to 2031 (INCHACPGGP…RCTQHGRCDE (66 aa)). Disulfide bonds link C1971–C1985, C1979–C1995, C1997–C2006, C2018–C2029, C2023–C2039, C2041–C2050, C2060–C2070, C2064–C2076, C2078–C2089, C2095–C2108, C2102–C2117, C2119–C2130, C2136–C2150, C2144–C2160, C2162–C2173, C2230–C2299, and C2254–C2275. 3 consecutive EGF-like domains span residues 2056-2090 (LQPVCTPPCAPQAVCRLGNSCECSLGYEGDGRVCT), 2091-2131 (VADL…WSCR), and 2132-2174 (ARDP…LQCL). The N-linked (GlcNAc...) asparagine glycan is linked to N2107. One can recognise a Link domain in the interval 2208 to 2301 (GVFHIQATSG…SELWDAYCYR (94 aa)). Residues N2261, N2290, N2334, N2347, N2379, N2393, N2400, and N2424 are each glycosylated (N-linked (GlcNAc...) asparagine). The 138-residue stretch at 2322–2459 (NGKLLDVLAA…GIIHALASPL (138 aa)) folds into the FAS1 7 domain. A helical membrane pass occupies residues 2476–2496 (VALSLGVVVTSGTLLGLVAGA). The Cytoplasmic segment spans residues 2497 to 2571 (LYLRARGKPP…PDTQRVLKVK (75 aa)).

In terms of assembly, interacts with CHID1.

It localises to the membrane. In terms of biological role, acts as a scavenger receptor for acetylated low density lipoprotein. Binds to both Gram-positive and Gram-negative bacteria and may play a role in defense against bacterial infection. When inhibited in endothelial tube formation assays, there is a marked decrease in cell-cell interactions, suggesting a role in angiogenesis. Involved in the delivery of newly synthesized CHID1/SI-CLP from the biosynthetic compartment to the endosomal/lysosomal system. The sequence is that of Stabilin-1 (Stab1) from Mus musculus (Mouse).